The primary structure comprises 611 residues: MFVKQYDVIVVGGGHSGSEAALAASNLGSNTLLITTNLYNIGQMSCNPAMGGIAKGQMIKEIDALGGYSGIITDKSMIQFRMLNKSKGPAMWSPRAQCDRLKFSKEWRLTLEKKKNLSFFQSTVVDLIIKNYKVIGVKTILGIYIKSKSVILTNGTFLNGIIHIGDKKNSGGRISENSVKGLTEKLKKIGFFSGRMKTGTSPRLDGRSLDFSKMIEQLGDFPIEPFSYLSNLNILKQKKCYITHTNLETHNLLSKEFNRSPIFNGKIKCVGPRYCPSIEEKVYRFSNKENHQIFVEPEGVNTIEVYINGFSTSMPEEVQYKALLTIPGFEHAKMVRPGYAIEYDYFPPTQLKNNLETKLIENLFFAGQINGTTGYEEAAAQGLIAGINANLKINEKDPFILKRNEAYIGVLIDDLIYKGTEEPYRMFTSRAEYRILLRQDNADERLTHMGINLGLVSYDRIKKLKNKNKNKKQCFLFFKINKANNLILKENIKICDLLSRPEISIYDIIKLSLIKNFIKKNNIDKKILEQISLYIKYKGYLLKEEENVKKMYRLETIRIPNDFDYNQVKSISIEAREKLLNYKPNSIGEASRISGVSPSDIRILILFLIKK.

12–17 serves as a coordination point for FAD; that stretch reads GGGHSG. 271–285 contacts NAD(+); that stretch reads GPRYCPSIEEKVYRF.

This sequence belongs to the MnmG family. In terms of assembly, homodimer. Heterotetramer of two MnmE and two MnmG subunits. FAD is required as a cofactor.

The protein resides in the cytoplasm. Functionally, NAD-binding protein involved in the addition of a carboxymethylaminomethyl (cmnm) group at the wobble position (U34) of certain tRNAs, forming tRNA-cmnm(5)s(2)U34. In Karelsulcia muelleri (strain GWSS) (Sulcia muelleri), this protein is tRNA uridine 5-carboxymethylaminomethyl modification enzyme MnmG.